The primary structure comprises 257 residues: Imidazole glycerol phosphate synthase subunit HisF (257 aa).

Catalysis depends on residues Asp-12 and Asp-131.

Belongs to the HisA/HisF family. Heterodimer of HisH and HisF.

It localises to the cytoplasm. The enzyme catalyses 5-[(5-phospho-1-deoxy-D-ribulos-1-ylimino)methylamino]-1-(5-phospho-beta-D-ribosyl)imidazole-4-carboxamide + L-glutamine = D-erythro-1-(imidazol-4-yl)glycerol 3-phosphate + 5-amino-1-(5-phospho-beta-D-ribosyl)imidazole-4-carboxamide + L-glutamate + H(+). It functions in the pathway amino-acid biosynthesis; L-histidine biosynthesis; L-histidine from 5-phospho-alpha-D-ribose 1-diphosphate: step 5/9. Its function is as follows. IGPS catalyzes the conversion of PRFAR and glutamine to IGP, AICAR and glutamate. The HisF subunit catalyzes the cyclization activity that produces IGP and AICAR from PRFAR using the ammonia provided by the HisH subunit. In Paraburkholderia phytofirmans (strain DSM 17436 / LMG 22146 / PsJN) (Burkholderia phytofirmans), this protein is Imidazole glycerol phosphate synthase subunit HisF.